The primary structure comprises 467 residues: 3-isopropylmalate dehydratase large subunit (467 aa).

[4Fe-4S] cluster contacts are provided by Cys-347, Cys-407, and Cys-410.

Belongs to the aconitase/IPM isomerase family. LeuC type 1 subfamily. Heterodimer of LeuC and LeuD. Requires [4Fe-4S] cluster as cofactor.

It catalyses the reaction (2R,3S)-3-isopropylmalate = (2S)-2-isopropylmalate. Its pathway is amino-acid biosynthesis; L-leucine biosynthesis; L-leucine from 3-methyl-2-oxobutanoate: step 2/4. Its function is as follows. Catalyzes the isomerization between 2-isopropylmalate and 3-isopropylmalate, via the formation of 2-isopropylmaleate. The sequence is that of 3-isopropylmalate dehydratase large subunit from Trichormus variabilis (strain ATCC 29413 / PCC 7937) (Anabaena variabilis).